We begin with the raw amino-acid sequence, 122 residues long: Large ribosomal subunit protein uL14 (122 aa).

This sequence belongs to the universal ribosomal protein uL14 family. In terms of assembly, part of the 50S ribosomal subunit. Forms a cluster with proteins L3 and L19. In the 70S ribosome, L14 and L19 interact and together make contacts with the 16S rRNA in bridges B5 and B8.

Binds to 23S rRNA. Forms part of two intersubunit bridges in the 70S ribosome. In Clostridium perfringens (strain ATCC 13124 / DSM 756 / JCM 1290 / NCIMB 6125 / NCTC 8237 / Type A), this protein is Large ribosomal subunit protein uL14.